The chain runs to 336 residues: Phenylalanine--tRNA ligase alpha subunit (336 aa).

E259 contributes to the Mg(2+) binding site.

This sequence belongs to the class-II aminoacyl-tRNA synthetase family. Phe-tRNA synthetase alpha subunit type 1 subfamily. Tetramer of two alpha and two beta subunits. Mg(2+) is required as a cofactor.

It localises to the cytoplasm. It catalyses the reaction tRNA(Phe) + L-phenylalanine + ATP = L-phenylalanyl-tRNA(Phe) + AMP + diphosphate + H(+). In Tropheryma whipplei (strain TW08/27) (Whipple's bacillus), this protein is Phenylalanine--tRNA ligase alpha subunit.